The chain runs to 85 residues: Small ribosomal subunit protein eS21 (85 aa).

Belongs to the eukaryotic ribosomal protein eS21 family. As to quaternary structure, component of the 40S small ribosomal subunit.

Its subcellular location is the cytoplasm. The protein resides in the cytosol. The protein localises to the rough endoplasmic reticulum. The protein is Small ribosomal subunit protein eS21 (rps-21) of Pectinaria gouldii (Trumpet worm).